The following is a 421-amino-acid chain: E3 ubiquitin-protein ligase MARCHF4 (421 aa).

The first 16 residues, 1–16 (MLLAIGVIVWCWGLLS), serve as a signal peptide directing secretion. Residues 60-79 (ELNAEGNATSSATESHSLAN) form a disordered region. A compositionally biased stretch (polar residues) spans 65–77 (GNATSSATESHSL). Residues 135–195 (DSGVRTPLCR…ELCYYKYQVI (61 aa)) form an RING-CH-type zinc finger. Zn(2+) contacts are provided by Cys-143, Cys-146, Cys-159, Cys-161, His-169, Cys-172, Cys-185, and Cys-188. Transmembrane regions (helical) follow at residues 218 to 238 (IAAAVLGSLFLIASISWLVWS) and 252 to 272 (LFQICYAMYGFMDLVCIALIV). Disordered stretches follow at residues 319-385 (PLTH…LPDH) and 401-421 (QEPRGQTSNSNRELVMRVTTV). Composition is skewed to polar residues over residues 367–380 (TEPQDSSEPSNGQP) and 403–412 (PRGQTSNSNR).

It localises to the golgi apparatus membrane. It carries out the reaction S-ubiquitinyl-[E2 ubiquitin-conjugating enzyme]-L-cysteine + [acceptor protein]-L-lysine = [E2 ubiquitin-conjugating enzyme]-L-cysteine + N(6)-ubiquitinyl-[acceptor protein]-L-lysine.. It participates in protein modification; protein ubiquitination. Functionally, E3 ubiquitin-protein ligase. E3 ubiquitin ligases accept ubiquitin from an E2 ubiquitin-conjugating enzyme in the form of a thioester and then directly transfer the ubiquitin to targeted substrates. This chain is E3 ubiquitin-protein ligase MARCHF4 (marchf4), found in Danio rerio (Zebrafish).